The chain runs to 293 residues: tRNA-cytidine(32) 2-sulfurtransferase (293 aa).

A PP-loop motif motif is present at residues 62 to 67 (SGGKDS). [4Fe-4S] cluster-binding residues include Cys137, Cys140, and Cys228.

Belongs to the TtcA family. In terms of assembly, homodimer. Requires Mg(2+) as cofactor. [4Fe-4S] cluster is required as a cofactor.

Its subcellular location is the cytoplasm. It carries out the reaction cytidine(32) in tRNA + S-sulfanyl-L-cysteinyl-[cysteine desulfurase] + AH2 + ATP = 2-thiocytidine(32) in tRNA + L-cysteinyl-[cysteine desulfurase] + A + AMP + diphosphate + H(+). The protein operates within tRNA modification. In terms of biological role, catalyzes the ATP-dependent 2-thiolation of cytidine in position 32 of tRNA, to form 2-thiocytidine (s(2)C32). The sulfur atoms are provided by the cysteine/cysteine desulfurase (IscS) system. This is tRNA-cytidine(32) 2-sulfurtransferase from Brucella melitensis biotype 1 (strain ATCC 23456 / CCUG 17765 / NCTC 10094 / 16M).